The following is an 861-amino-acid chain: Bifunctional uridylyltransferase/uridylyl-removing enzyme (861 aa).

Positions 1 to 321 (MKNDNRIIKN…VYHQKQKIIR (321 aa)) are uridylyltransferase. A uridylyl-removing region spans residues 322–678 (LDDEFQLSNR…IMPHHSQGGT (357 aa)). Residues 440 to 562 (VDQHTLFVIR…LPHARYLDYL (123 aa)) enclose the HD domain. 2 consecutive ACT domains span residues 679-760 (EVFI…AVSR) and 788-861 (QLFL…KSKY).

The protein belongs to the GlnD family. Mg(2+) is required as a cofactor.

It catalyses the reaction [protein-PII]-L-tyrosine + UTP = [protein-PII]-uridylyl-L-tyrosine + diphosphate. The catalysed reaction is [protein-PII]-uridylyl-L-tyrosine + H2O = [protein-PII]-L-tyrosine + UMP + H(+). With respect to regulation, uridylyltransferase (UTase) activity is inhibited by glutamine, while glutamine activates uridylyl-removing (UR) activity. Functionally, modifies, by uridylylation and deuridylylation, the PII regulatory proteins (GlnB and homologs), in response to the nitrogen status of the cell that GlnD senses through the glutamine level. Under low glutamine levels, catalyzes the conversion of the PII proteins and UTP to PII-UMP and PPi, while under higher glutamine levels, GlnD hydrolyzes PII-UMP to PII and UMP (deuridylylation). Thus, controls uridylylation state and activity of the PII proteins, and plays an important role in the regulation of nitrogen assimilation and metabolism. The sequence is that of Bifunctional uridylyltransferase/uridylyl-removing enzyme from Legionella pneumophila (strain Corby).